We begin with the raw amino-acid sequence, 275 residues long: Cis-2,3-dihydrobiphenyl-2,3-diol dehydrogenase (275 aa).

9–33 (LITGGASGLGRALVDRFVAEAKVAV) is an NAD(+) binding site. Ser140 is a binding site for substrate. The active-site Proton acceptor is Tyr153.

The protein belongs to the short-chain dehydrogenases/reductases (SDR) family.

It catalyses the reaction (2R,3S)-3-phenylcyclohexa-3,5-diene-1,2-diol + NAD(+) = biphenyl-2,3-diol + NADH + H(+). It functions in the pathway xenobiotic degradation; biphenyl degradation; 2-hydroxy-2,4-pentadienoate and benzoate from biphenyl: step 2/4. The polypeptide is Cis-2,3-dihydrobiphenyl-2,3-diol dehydrogenase (bphB) (Metapseudomonas furukawaii (Pseudomonas furukawaii)).